The chain runs to 93 residues: uncharacterized protein (93 aa).

This is an uncharacterized protein from Saimiriine herpesvirus 2 (strain 11) (SaHV-2).